Here is a 244-residue protein sequence, read N- to C-terminus: Rho-related GTP-binding protein RhoE (244 aa).

A GTP-binding site is contributed by 30 to 37 (GDSQCGRT). The Effector region motif lies at 52–60 (YVPTVFENY). GTP is bound by residues 77–81 (DTSGS) and 135–138 (CKSD). Cys-241 is modified (cysteine methyl ester). Cys-241 carries the S-farnesyl cysteine lipid modification. Positions 242-244 (TVM) are cleaved as a propeptide — removed in mature form.

The protein belongs to the small GTPase superfamily. Rho family. In terms of assembly, binds ROCK1. Interacts with UBXD5.

The protein localises to the cell membrane. Functionally, binds GTP but lacks intrinsic GTPase activity and is resistant to Rho-specific GTPase-activating proteins. The polypeptide is Rho-related GTP-binding protein RhoE (RND3) (Sus scrofa (Pig)).